The following is a 91-amino-acid chain: Metalloproteinase inhibitor 2 (91 aa).

The region spanning 1–91 (KAVSEKEVDS…FIVPWDTLST (91 aa)) is the NTR domain.

This sequence belongs to the protease inhibitor I35 (TIMP) family. The activity of TIMP2 is dependent on the presence of disulfide bonds.

The protein resides in the secreted. Complexes with metalloproteinases (such as collagenases) and irreversibly inactivates them. The polypeptide is Metalloproteinase inhibitor 2 (TIMP2) (Equus caballus (Horse)).